The primary structure comprises 490 residues: Apocarotenoid-15,15'-oxygenase (490 aa).

H183 is a Fe cation binding site. A substrate-binding site is contributed by S206. H238 contacts Fe cation. Substrate is bound at residue F303. Residues H304 and H484 each contribute to the Fe cation site.

It belongs to the carotenoid oxygenase family. Fe(2+) is required as a cofactor.

The enzyme catalyses all-trans-8'-apo-beta-carotenal + O2 = (2E,4E,6E)-2,6-dimethylocta-2,4,6-trienedial + all-trans-retinal. Cleaves a number of carotenals and carotenols in the all-trans configuration at the 15-15' double bond producing retinal or retinol, respectively. Also shows activity toward lycopenals and the corresponding alcohols. Does not cleave beta-carotene or lycopene. The protein is Apocarotenoid-15,15'-oxygenase of Synechocystis sp. (strain ATCC 27184 / PCC 6803 / Kazusa).